The chain runs to 270 residues: Shikimate dehydrogenase (NADP(+)) (270 aa).

Shikimate contacts are provided by residues 14 to 16 (SKS) and T61. The Proton acceptor role is filled by K65. 2 residues coordinate shikimate: N86 and D101. NADP(+) contacts are provided by residues 126–130 (GAGGA), 150–155 (NRTVDK), and M215. Residue Y217 coordinates shikimate. Position 238 (G238) interacts with NADP(+).

It belongs to the shikimate dehydrogenase family. In terms of assembly, homodimer.

The enzyme catalyses shikimate + NADP(+) = 3-dehydroshikimate + NADPH + H(+). It participates in metabolic intermediate biosynthesis; chorismate biosynthesis; chorismate from D-erythrose 4-phosphate and phosphoenolpyruvate: step 4/7. Its function is as follows. Involved in the biosynthesis of the chorismate, which leads to the biosynthesis of aromatic amino acids. Catalyzes the reversible NADPH linked reduction of 3-dehydroshikimate (DHSA) to yield shikimate (SA). This chain is Shikimate dehydrogenase (NADP(+)), found in Methylobacillus flagellatus (strain ATCC 51484 / DSM 6875 / VKM B-1610 / KT).